A 229-amino-acid chain; its full sequence is Biosynthetic peptidoglycan transglycosylase (229 aa).

The helical transmembrane segment at Asn11–Tyr31 threads the bilayer.

The protein belongs to the glycosyltransferase 51 family.

The protein resides in the cell inner membrane. The catalysed reaction is [GlcNAc-(1-&gt;4)-Mur2Ac(oyl-L-Ala-gamma-D-Glu-L-Lys-D-Ala-D-Ala)](n)-di-trans,octa-cis-undecaprenyl diphosphate + beta-D-GlcNAc-(1-&gt;4)-Mur2Ac(oyl-L-Ala-gamma-D-Glu-L-Lys-D-Ala-D-Ala)-di-trans,octa-cis-undecaprenyl diphosphate = [GlcNAc-(1-&gt;4)-Mur2Ac(oyl-L-Ala-gamma-D-Glu-L-Lys-D-Ala-D-Ala)](n+1)-di-trans,octa-cis-undecaprenyl diphosphate + di-trans,octa-cis-undecaprenyl diphosphate + H(+). It participates in cell wall biogenesis; peptidoglycan biosynthesis. In terms of biological role, peptidoglycan polymerase that catalyzes glycan chain elongation from lipid-linked precursors. In Caulobacter vibrioides (strain ATCC 19089 / CIP 103742 / CB 15) (Caulobacter crescentus), this protein is Biosynthetic peptidoglycan transglycosylase.